The following is a 490-amino-acid chain: Betaine aldehyde dehydrogenase (490 aa).

Asp93 lines the K(+) pocket. 150–152 lines the NAD(+) pocket; the sequence is GAW. Residue Lys162 is the Charge relay system of the active site. 176 to 179 contributes to the NAD(+) binding site; sequence KPSE. Residue Val180 coordinates K(+). NAD(+) is bound at residue 230–233; that stretch reads GIAS. Leu246 contacts K(+). Glu252 functions as the Proton acceptor in the catalytic mechanism. Gly254, Cys286, and Glu387 together coordinate NAD(+). The active-site Nucleophile is the Cys286. Position 286 is a cysteine sulfenic acid (-SOH) (Cys286). Residues Lys457 and Gly460 each contribute to the K(+) site. Catalysis depends on Glu464, which acts as the Charge relay system.

The protein belongs to the aldehyde dehydrogenase family. In terms of assembly, dimer of dimers. The cofactor is K(+).

The enzyme catalyses betaine aldehyde + NAD(+) + H2O = glycine betaine + NADH + 2 H(+). Its pathway is amine and polyamine biosynthesis; betaine biosynthesis via choline pathway; betaine from betaine aldehyde: step 1/1. In terms of biological role, involved in the biosynthesis of the osmoprotectant glycine betaine. Catalyzes the irreversible oxidation of betaine aldehyde to the corresponding acid. The chain is Betaine aldehyde dehydrogenase from Pectobacterium atrosepticum (strain SCRI 1043 / ATCC BAA-672) (Erwinia carotovora subsp. atroseptica).